Consider the following 516-residue polypeptide: Gamma-aminobutyrate transaminase 1, mitochondrial (516 aa).

A mitochondrion-targeting transit peptide spans Met-1–Phe-47. Residue Gly-171–Ser-172 participates in pyridoxal 5'-phosphate binding. Tyr-204 provides a ligand contact to substrate. Asp-311 contributes to the pyridoxal 5'-phosphate binding site. Substrate is bound at residue Lys-340. N6-(pyridoxal phosphate)lysine is present on Lys-340.

Belongs to the class-III pyridoxal-phosphate-dependent aminotransferase family. In terms of tissue distribution, expressed in roots, stems and panicles.

The protein resides in the mitochondrion. It carries out the reaction 4-aminobutanoate + pyruvate = succinate semialdehyde + L-alanine. It catalyses the reaction 4-aminobutanoate + glyoxylate = succinate semialdehyde + glycine. Its function is as follows. Transaminase that degrades gamma-amino butyric acid (GABA) and uses pyruvate as amino-group acceptor, but not 2-oxoglutarate. Not involved in the interaction with blast fungus. In Oryza sativa subsp. japonica (Rice), this protein is Gamma-aminobutyrate transaminase 1, mitochondrial (OSL2).